The following is a 104-amino-acid chain: Protein translation factor SUI1 homolog (104 aa).

It belongs to the SUI1 family.

The protein is Protein translation factor SUI1 homolog of Ignicoccus hospitalis (strain KIN4/I / DSM 18386 / JCM 14125).